Here is a 152-residue protein sequence, read N- to C-terminus: Conglutin delta 1 (152 aa).

An N-terminal signal peptide occupies residues 1–22 (MAKLTILIALVAALVLVVHTSA). Cystine bridges form between Cys-30–Cys-101, Cys-42–Cys-89, Cys-90–Cys-137, and Cys-103–Cys-145.

It belongs to the 2S seed storage albumins family. In terms of assembly, heterodimer of a small chain and a large chain; disulfide-linked. In terms of tissue distribution, expressed in developing cotyledons and in the embryonic axis of germinating seeds.

Its subcellular location is the endoplasmic reticulum. The sequence is that of Conglutin delta 1 from Lupinus angustifolius (Narrow-leaved blue lupine).